Reading from the N-terminus, the 57-residue chain is Sperm protamine P1-type (57 aa).

The disordered stretch occupies residues 1-57 (MARYRHNRSRSRSRHRRRRRGHRGGRYRRRRRRGRYGHRRHHRGHSRRRRKRRRSRH).

Belongs to the protamine P1 family. Testis.

Its subcellular location is the nucleus. It localises to the chromosome. Protamines substitute for histones in the chromatin of sperm during the haploid phase of spermatogenesis. They compact sperm DNA into a highly condensed, stable and inactive complex. This is Sperm protamine P1-type from Alligator mississippiensis (American alligator).